The chain runs to 241 residues: Ubiquinone biosynthesis O-methyltransferase (241 aa).

Arginine 44, glycine 63, aspartate 84, and methionine 128 together coordinate S-adenosyl-L-methionine.

The protein belongs to the methyltransferase superfamily. UbiG/COQ3 family.

It carries out the reaction a 3-demethylubiquinol + S-adenosyl-L-methionine = a ubiquinol + S-adenosyl-L-homocysteine + H(+). It catalyses the reaction a 3-(all-trans-polyprenyl)benzene-1,2-diol + S-adenosyl-L-methionine = a 2-methoxy-6-(all-trans-polyprenyl)phenol + S-adenosyl-L-homocysteine + H(+). The protein operates within cofactor biosynthesis; ubiquinone biosynthesis. In terms of biological role, O-methyltransferase that catalyzes the 2 O-methylation steps in the ubiquinone biosynthetic pathway. The chain is Ubiquinone biosynthesis O-methyltransferase from Hydrogenovibrio crunogenus (strain DSM 25203 / XCL-2) (Thiomicrospira crunogena).